Reading from the N-terminus, the 88-residue chain is UPF0297 protein STER_1937 (88 aa).

The protein belongs to the UPF0297 family.

This is UPF0297 protein STER_1937 from Streptococcus thermophilus (strain ATCC BAA-491 / LMD-9).